A 388-amino-acid polypeptide reads, in one-letter code: Succinate--CoA ligase [ADP-forming] subunit beta (388 aa).

Residues 9-244 enclose the ATP-grasp domain; it reads KQLFAEYGLP…PSQDDAREAH (236 aa). Residues lysine 46, 53 to 55, glutamate 99, threonine 102, and glutamate 107 each bind ATP; that span reads GRG. Mg(2+) is bound by residues asparagine 199 and aspartate 213. Residues asparagine 264 and 321 to 323 contribute to the substrate site; that span reads GIV.

Belongs to the succinate/malate CoA ligase beta subunit family. Heterotetramer of two alpha and two beta subunits. Mg(2+) serves as cofactor.

It catalyses the reaction succinate + ATP + CoA = succinyl-CoA + ADP + phosphate. It carries out the reaction GTP + succinate + CoA = succinyl-CoA + GDP + phosphate. It functions in the pathway carbohydrate metabolism; tricarboxylic acid cycle; succinate from succinyl-CoA (ligase route): step 1/1. Its function is as follows. Succinyl-CoA synthetase functions in the citric acid cycle (TCA), coupling the hydrolysis of succinyl-CoA to the synthesis of either ATP or GTP and thus represents the only step of substrate-level phosphorylation in the TCA. The beta subunit provides nucleotide specificity of the enzyme and binds the substrate succinate, while the binding sites for coenzyme A and phosphate are found in the alpha subunit. This is Succinate--CoA ligase [ADP-forming] subunit beta from Pseudomonas putida (strain ATCC 700007 / DSM 6899 / JCM 31910 / BCRC 17059 / LMG 24140 / F1).